Here is a 420-residue protein sequence, read N- to C-terminus: F-box/LRR-repeat protein At2g43260 (420 aa).

In terms of domain architecture, F-box spans 7 to 53 (NPNSIDILPELLEEVLLRLPTKSILKCRIVSKQWRSLLESSRFAERH). LRR repeat units follow at residues 112 to 135 (QDWIIVLNPSTSQLRRFPSGLNHN) and 226 to 251 (VYRILALDLHKEEFHKVPVPPTQITV).

The protein is F-box/LRR-repeat protein At2g43260 of Arabidopsis thaliana (Mouse-ear cress).